We begin with the raw amino-acid sequence, 146 residues long: MELNSIKPAAGASKNRKRIGRGTGSGHGKTATKGHKGQKARSGGSVKAGFEGGQMPMHRRLPKRGFKPLSKKVYSVVNLSQLDAFEQGSCVDVEAMQKSGLVKDICDGIKILASGELTKSLTIKAHKFSAAARDKITSVGGTVEEI.

Residues 1 to 64 (MELNSIKPAA…MPMHRRLPKR (64 aa)) form a disordered region. Positions 30–39 (TATKGHKGQK) are enriched in basic residues.

It belongs to the universal ribosomal protein uL15 family. In terms of assembly, part of the 50S ribosomal subunit.

Functionally, binds to the 23S rRNA. The chain is Large ribosomal subunit protein uL15 from Geotalea daltonii (strain DSM 22248 / JCM 15807 / FRC-32) (Geobacter daltonii).